A 155-amino-acid chain; its full sequence is uncharacterized protein (155 aa).

Residues 7–154 enclose the N-acetyltransferase domain; sequence LQINYKTLEE…VWLPESVELQ (148 aa).

This is an uncharacterized protein from Brevibacillus brevis (strain 47 / JCM 6285 / NBRC 100599).